Consider the following 154-residue polypeptide: Fimbrial protein (154 aa).

Positions 1 to 6 are cleaved as a propeptide — leader sequence; sequence MNAQKG. F7 bears the N-methylphenylalanine mark. A helical transmembrane segment spans residues 7–29; the sequence is FTLIELMIVIAIIGILAAIALPA.

The protein belongs to the N-Me-Phe pilin family. As to quaternary structure, the pili are polar flexible filaments of about 5.4 nanometers diameter and 2.5 micrometers average length; they consist of only a single polypeptide chain arranged in a helical configuration of five subunits per turn in the assembled pilus.

The protein resides in the fimbrium. The protein localises to the membrane. This Moraxella nonliquefaciens protein is Fimbrial protein (tfpA).